Here is a 305-residue protein sequence, read N- to C-terminus: Cytochrome c biogenesis protein CcsA (305 aa).

8 consecutive transmembrane segments (helical) span residues 4–24, 32–52, 58–78, 91–111, 136–156, 212–232, 246–263, and 275–295; these read VLGL…LAFW, SGLV…QLVL, GHFP…ACTL, IVAA…SFAL, VIMV…AVLV, TITV…VWAN, TWAL…HTRL, and VASA…LLGI.

Belongs to the CcmF/CycK/Ccl1/NrfE/CcsA family. As to quaternary structure, may interact with ccs1.

It is found in the cellular thylakoid membrane. Required during biogenesis of c-type cytochromes (cytochrome c6 and cytochrome f) at the step of heme attachment. The protein is Cytochrome c biogenesis protein CcsA of Synechococcus sp. (strain CC9311).